Here is a 209-residue protein sequence, read N- to C-terminus: Thymidylate kinase (209 aa).

10–17 (GPEGAGKT) serves as a coordination point for ATP.

Belongs to the thymidylate kinase family.

It carries out the reaction dTMP + ATP = dTDP + ADP. In terms of biological role, phosphorylation of dTMP to form dTDP in both de novo and salvage pathways of dTTP synthesis. The chain is Thymidylate kinase from Anoxybacillus flavithermus (strain DSM 21510 / WK1).